The sequence spans 386 residues: MRAAPLLLARAASLSLGFLFLLFFWLDRSVLAKELKFVTLVFRHGDRSPIDTFPTDPIKESSWPQGFGQLTQLGMEQHYELGEYIRKRYRKFLNESYKHEQVYIRSTDVDRTLMSAMTNLAALFPPEGVSIWNPILLWQPIPVHTVPLSEDQLLYLPFRNCPRFQELESETLKSEEFQKRLHPYKDFIATLGKLSGLHGQDLFGIWSKVYDPLYCESVHNFTLPSWATEDTMTKLRELSELSLLSLYGIHKQKEKSRLQGGVLVNEILNHMKRATQIPSYKKLIMYSAHDTTVSGLQMALDVYNGLLPPYASCHLTELYFEKGEYFVEMYYRNETQHEPYPLMLPGCSPSCPLERFAELVGPVIPQDWSTECMTTNSHQGTEDSTD.

The signal sequence occupies residues 1–32; that stretch reads MRAAPLLLARAASLSLGFLFLLFFWLDRSVLA. Residue R43 coordinates substrate. H44 acts as the Nucleophile in catalysis. R47 is a substrate binding site. N94 carries N-linked (GlcNAc...) asparagine glycosylation. R111 contacts substrate. 3 cysteine pairs are disulfide-bonded: C161–C372, C215–C313, and C347–C351. Residue N220 is glycosylated (N-linked (GlcNAc...) asparagine). H289 is a binding site for substrate. D290 serves as the catalytic Proton donor. Residue N333 is glycosylated (N-linked (GlcNAc...) asparagine).

It belongs to the histidine acid phosphatase family. As to quaternary structure, homodimer; dimer formation is required for phosphatase activity. Post-translationally, N-glycosylated. High mannose content, partially sialylated and fucosylated biantennary complex. Also fucosylated with partially sialylated triantennary complex oligosaccharides. Proteolytically cleaved in seminal fluid to produce several peptides. Peptide PAPf39, the most prominent, forms amyloid beta-sheet fibrils, SEVI (semen-derived enhancer of viral infection). As to expression, highly expressed in the prostate, restricted to glandular and ductal epithelial cells. Also expressed in bladder, kidney, pancreas, lung, cervix, testis and ovary. Weak expression in a subset of pancreatic islet cells, squamous epithelia, the pilosebaceous unit, colonic neuroendocrine cells and skin adnexal structures. Low expression in prostate carcinoma cells and tissues. In terms of tissue distribution, widely expressed. Expressed in the sarcolemma of skeletal muscle.

It is found in the secreted. The protein localises to the cell membrane. The protein resides in the lysosome membrane. It localises to the nucleus. Its subcellular location is the cytoplasm. It is found in the cytosol. The catalysed reaction is a phosphate monoester + H2O = an alcohol + phosphate. The enzyme catalyses 1-(9Z-octadecenoyl)-sn-glycero-3-phosphate + H2O = 1-(9Z-octadecenoyl)-sn-glycerol + phosphate. It carries out the reaction a ribonucleoside 5'-phosphate + H2O = a ribonucleoside + phosphate. It catalyses the reaction O-phospho-L-tyrosyl-[protein] + H2O = L-tyrosyl-[protein] + phosphate. With respect to regulation, phosphatase activity inhibited by L(+)-tartrate, and by its derivative, alpha-benzylaminobenzylphosphonic acid. A non-specific tyrosine phosphatase that dephosphorylates a diverse number of substrates under acidic conditions (pH 4-6) including alkyl, aryl, and acyl orthophosphate monoesters and phosphorylated proteins. Has lipid phosphatase activity and inactivates lysophosphatidic acid in seminal plasma. Functionally, tyrosine phosphatase that acts as a tumor suppressor of prostate cancer through dephosphorylation of ERBB2 and deactivation of MAPK-mediated signaling. In addition to its tyrosine phosphatase activity has ecto-5'-nucleotidase activity in dorsal root ganglion (DRG) neurons. Generates adenosine from AMP which acts as a pain suppressor. Its function is as follows. (Microbial infection) Forms amyloid beta-sheet fibrils in semen. These fibrils, termed SEVI (semen-derived enhancer of viral infection) capture HIV virions, attach them to target cells and enhance infection. SEVI amyloid fibrils are degraded by polyphenol epigallocatechin-3-gallate (EGCG), a constituent of green tea. Target cell attachment and enhancement of HIV infection is inhibited by surfen. Also similarly boosts XMRV (xenotropic murine leukemia virus-related virus) infection. This Homo sapiens (Human) protein is Prostatic acid phosphatase.